Consider the following 211-residue polypeptide: MEPAREPPARARPPPPAARPAPAAPRPRSPAEAEARGPEGLLRRSGSGYEGSTSWKAALEDTTTRLLLGAIAVLLFAILVVMSILASKGCIKCETPCPEDWLLYGRKCYYFSEEPRDWNTGRQYCHTHEAALAVIQSQKELEFMFKFTRREPWIGLRRVGDDFHWVNGDPFDPDTFTISGTGECVFVEPTRLVSTECLTTRPWVCSKMAYT.

Positions Met1–Thr53 are disordered. Residues Arg10–Arg28 show a composition bias toward pro residues. Position 29 is a phosphoserine (Ser29). Residues Leu66–Ala86 traverse the membrane as a helical segment. 3 disulfide bridges follow: Cys97-Cys108, Cys125-Cys205, and Cys184-Cys197. Residues Tyr104–Ser206 form the C-type lectin domain.

It is found in the membrane. The sequence is that of C-type lectin domain family 2 member L (Clec2l) from Rattus norvegicus (Rat).